The following is an 834-amino-acid chain: Leucine--tRNA ligase (834 aa).

Positions Pro36–His46 match the 'HIGH' region motif. A 'KMSKS' region motif is present at residues Lys602 to Ser606. Lys605 is a binding site for ATP.

It belongs to the class-I aminoacyl-tRNA synthetase family.

The protein resides in the cytoplasm. It catalyses the reaction tRNA(Leu) + L-leucine + ATP = L-leucyl-tRNA(Leu) + AMP + diphosphate. This Rickettsia canadensis (strain McKiel) protein is Leucine--tRNA ligase.